The following is a 203-amino-acid chain: Large ribosomal subunit protein bL25 (203 aa).

Belongs to the bacterial ribosomal protein bL25 family. CTC subfamily. As to quaternary structure, part of the 50S ribosomal subunit; part of the 5S rRNA/L5/L18/L25 subcomplex. Contacts the 5S rRNA. Binds to the 5S rRNA independently of L5 and L18.

This is one of the proteins that binds to the 5S RNA in the ribosome where it forms part of the central protuberance. This Cereibacter sphaeroides (strain ATCC 17029 / ATH 2.4.9) (Rhodobacter sphaeroides) protein is Large ribosomal subunit protein bL25.